The following is a 312-amino-acid chain: MGPAGLKVLLLLFLGAFQGSFTKKKNLQSVCGRPVHTGRIVGGQDAALGRWPWQVSLRFDYTHSCGGSLISDHWVLTAAHCIKKTWYSFLYSVWLGSIDREYSSTGKEYYVSRIAIPDKHRHTEADIALLKLSSRVTFSSVILPICLPNISKQLTVPASCWVTGWGQNQEGHYPSTLQELEVPVISSEACEQLYNPIGVFLPDLERVIKEDMFCAGERQSRKDSCKGDSGGPLSCHIDGVWRLMGVVSWGLECGKDLPGVYTNVTYYQKWISAIISRAPPGWGGDSTHMTSCSLLCYFLWLSWDPPEPLALA.

The first 22 residues, 1-22 (MGPAGLKVLLLLFLGAFQGSFT), serve as a signal peptide directing secretion. The Peptidase S1 domain maps to 40-276 (IVGGQDAALG…YQKWISAIIS (237 aa)). Cysteine 65 and cysteine 81 are oxidised to a cystine. Active-site charge relay system residues include histidine 80 and aspartate 126. The N-linked (GlcNAc...) asparagine glycan is linked to asparagine 149. Cystine bridges form between cysteine 160–cysteine 235, cysteine 190–cysteine 214, and cysteine 225–cysteine 253. Serine 229 acts as the Charge relay system in catalysis. A glycan (N-linked (GlcNAc...) asparagine) is linked at asparagine 263.

Belongs to the peptidase S1 family.

Its subcellular location is the secreted. This is Serine protease 48 (Prss48) from Mus musculus (Mouse).